The sequence spans 105 residues: Cell division protein FtsB (105 aa).

At 1 to 3 (MGK) the chain is on the cytoplasmic side. A helical membrane pass occupies residues 4-21 (LTLLLLALLVWLQYSLWF). Residues 22-105 (GKNGLHDYTR…QASGQQQNNR (84 aa)) are Periplasmic-facing. Residues 33-62 (NDDVTAQQATNAKLKARNDQLFAEIDDLNG) are a coiled coil.

The protein belongs to the FtsB family. In terms of assembly, part of a complex composed of FtsB, FtsL and FtsQ.

It is found in the cell inner membrane. Its function is as follows. Essential cell division protein. May link together the upstream cell division proteins, which are predominantly cytoplasmic, with the downstream cell division proteins, which are predominantly periplasmic. In Klebsiella aerogenes (Enterobacter aerogenes), this protein is Cell division protein FtsB.